Reading from the N-terminus, the 316-residue chain is Methionyl-tRNA formyltransferase (316 aa).

112-115 (SLLP) is a (6S)-5,6,7,8-tetrahydrofolate binding site.

This sequence belongs to the Fmt family.

It catalyses the reaction L-methionyl-tRNA(fMet) + (6R)-10-formyltetrahydrofolate = N-formyl-L-methionyl-tRNA(fMet) + (6S)-5,6,7,8-tetrahydrofolate + H(+). Functionally, attaches a formyl group to the free amino group of methionyl-tRNA(fMet). The formyl group appears to play a dual role in the initiator identity of N-formylmethionyl-tRNA by promoting its recognition by IF2 and preventing the misappropriation of this tRNA by the elongation apparatus. The protein is Methionyl-tRNA formyltransferase of Psychromonas ingrahamii (strain DSM 17664 / CCUG 51855 / 37).